A 512-amino-acid chain; its full sequence is GMP synthase [glutamine-hydrolyzing] (512 aa).

A Glutamine amidotransferase type-1 domain is found at threonine 7 to glycine 197. Cysteine 84 (nucleophile) is an active-site residue. Active-site residues include histidine 171 and glutamate 173. Residues tryptophan 198–arginine 387 form the GMPS ATP-PPase domain. Serine 225–serine 231 provides a ligand contact to ATP.

As to quaternary structure, homodimer.

The catalysed reaction is XMP + L-glutamine + ATP + H2O = GMP + L-glutamate + AMP + diphosphate + 2 H(+). The protein operates within purine metabolism; GMP biosynthesis; GMP from XMP (L-Gln route): step 1/1. In terms of biological role, catalyzes the synthesis of GMP from XMP. This is GMP synthase [glutamine-hydrolyzing] from Bacillus cereus (strain G9842).